The following is a 212-amino-acid chain: Large ribosomal subunit protein uL3 (212 aa).

The segment at 147-166 (GSTGQNQSPGKVFKGKKMPG) is disordered. Glutamine 153 carries the post-translational modification N5-methylglutamine.

Belongs to the universal ribosomal protein uL3 family. Part of the 50S ribosomal subunit. Forms a cluster with proteins L14 and L19. In terms of processing, methylated by PrmB.

Its function is as follows. One of the primary rRNA binding proteins, it binds directly near the 3'-end of the 23S rRNA, where it nucleates assembly of the 50S subunit. The sequence is that of Large ribosomal subunit protein uL3 from Psychrobacter sp. (strain PRwf-1).